Here is a 250-residue protein sequence, read N- to C-terminus: 3-deoxy-manno-octulosonate cytidylyltransferase (250 aa).

This sequence belongs to the KdsB family.

The protein localises to the cytoplasm. It catalyses the reaction 3-deoxy-alpha-D-manno-oct-2-ulosonate + CTP = CMP-3-deoxy-beta-D-manno-octulosonate + diphosphate. It functions in the pathway nucleotide-sugar biosynthesis; CMP-3-deoxy-D-manno-octulosonate biosynthesis; CMP-3-deoxy-D-manno-octulosonate from 3-deoxy-D-manno-octulosonate and CTP: step 1/1. The protein operates within bacterial outer membrane biogenesis; lipopolysaccharide biosynthesis. Activates KDO (a required 8-carbon sugar) for incorporation into bacterial lipopolysaccharide in Gram-negative bacteria. The protein is 3-deoxy-manno-octulosonate cytidylyltransferase of Rhizobium meliloti (strain 1021) (Ensifer meliloti).